Consider the following 226-residue polypeptide: Large ribosomal subunit protein uL1 (226 aa).

The protein belongs to the universal ribosomal protein uL1 family. As to quaternary structure, part of the 50S ribosomal subunit.

Functionally, binds directly to 23S rRNA. The L1 stalk is quite mobile in the ribosome, and is involved in E site tRNA release. Protein L1 is also a translational repressor protein, it controls the translation of the L11 operon by binding to its mRNA. In Borreliella burgdorferi (strain ZS7) (Borrelia burgdorferi), this protein is Large ribosomal subunit protein uL1.